The sequence spans 218 residues: Sodium channel regulatory subunit beta-1 (218 aa).

An N-terminal signal peptide occupies residues 1 to 18 (MGTLLALVVGAALVSSAW). Topologically, residues 19–157 (GGCVEVDSET…DKANRDMASI (139 aa)) are extracellular. 2 cysteine pairs are disulfide-bonded: cysteine 21–cysteine 43 and cysteine 40–cysteine 121. The region spanning 22-150 (VEVDSETEAV…KIHIEVVDKA (129 aa)) is the Ig-like C2-type domain. N-linked (GlcNAc...) asparagine glycosylation is found at asparagine 93, asparagine 110, asparagine 114, and asparagine 135. A helical membrane pass occupies residues 158-179 (VSEIMMYVLIVVLTIWLVAEMV). The Cytoplasmic segment spans residues 180–218 (YCYKKIAAATEAAAQENASEYLAITSESKENCTGVQVAE).

This sequence belongs to the sodium channel auxiliary subunit SCN1B (TC 8.A.17) family. In terms of assembly, a voltage-gated sodium (Nav) channel consists of an ion-conducting pore-forming alpha subunit functional on its own that is regulated by one or more beta subunits. Interacts with SCN1A; regulatory subunit of SCN1A/Nav1.1. Interacts with SCN3A; regulatory subunit of SCN3A/Nav1.3. Interacts with SCN4A; regulatory subunit of SCN4A/Nav1.4. Interacts with SCN5A; regulatory subunit of SCN5A/Nav1.5. Interacts with SCN8A; regulatory subunit of SCN8A/Nav1.6. Interacts with SCN9A; regulatory subunit of SCN9A/Nav1.7. Interacts with SCN10A; regulatory subunit of SCN10A/Nav1.8. Interacts with NFASC. Interacts with TMEM65.

The protein resides in the cell membrane. Its subcellular location is the perikaryon. It is found in the cell projection. The protein localises to the axon. Functionally, regulatory subunit of multiple voltage-gated sodium (Nav) channels directly mediating the depolarization of excitable membranes. Navs, also called VGSCs (voltage-gated sodium channels) or VDSCs (voltage-dependent sodium channels), operate by switching between closed and open conformations depending on the voltage difference across the membrane. In the open conformation they allow Na(+) ions to selectively pass through the pore, along their electrochemical gradient. The influx of Na+ ions provokes membrane depolarization, initiating the propagation of electrical signals throughout cells and tissues. The accessory beta subunits participate in localization and functional modulation of the Nav channels. Modulates the activity of SCN1A/Nav1.1, SCN2A/Nav1.2, SCN3A/Nav1.3, SCN4A/Nav1.4, SCN5A/Nav1.5, SCN8A/Nav1.6, SCN9A/Nav1.7 and SCN10A/Nav1.8. The polypeptide is Sodium channel regulatory subunit beta-1 (Canis lupus familiaris (Dog)).